The primary structure comprises 223 residues: HTH-type transcriptional dual regulator CecR (223 aa).

In terms of domain architecture, HTH tetR-type spans 11–70 (EQAKKQLIAAALAQFGEYGMNATTREIAAQAGQNIAAITYYFGSKEDLYLACAQWIADFI). The H-T-H motif DNA-binding region spans 33 to 52 (TTREIAAQAGQNIAAITYYF).

Its subcellular location is the cytoplasm. In terms of biological role, regulates transcription of the cecR-ybhGFSR operon and the rhlE gene, which altogether are involved in the control of sensitivity to cefoperazone and chloramphenicol. Represses the cecR-ybhGFSR operon and activates the rhlE operon. Acts by binding to a palindromic sequence within the intergenic spacer located between these two divergently transcribed operons. This is HTH-type transcriptional dual regulator CecR from Shigella flexneri.